A 78-amino-acid chain; its full sequence is Probable [Fe-S]-dependent transcriptional repressor (78 aa).

Residues Cys-56, Cys-61, Cys-64, and Cys-70 each contribute to the iron-sulfur cluster site.

It belongs to the FeoC family.

In terms of biological role, may function as a transcriptional regulator that controls feoABC expression. This chain is Probable [Fe-S]-dependent transcriptional repressor, found in Citrobacter koseri (strain ATCC BAA-895 / CDC 4225-83 / SGSC4696).